Reading from the N-terminus, the 156-residue chain is Cell division protein SepF (156 aa).

Residues 15-58 form a disordered region; it reads SDVVPEDEDDEVIDEEPESSFDTDRSVTPIPAASTQPSTSQRKS. Acidic residues predominate over residues 18 to 35; that stretch reads VPEDEDDEVIDEEPESSF. Over residues 47 to 57 the composition is skewed to polar residues; the sequence is ASTQPSTSQRK.

This sequence belongs to the SepF family. In terms of assembly, homodimer. Interacts with FtsZ.

The protein localises to the cytoplasm. Cell division protein that is part of the divisome complex and is recruited early to the Z-ring. Probably stimulates Z-ring formation, perhaps through the cross-linking of FtsZ protofilaments. Its function overlaps with FtsA. In Bifidobacterium animalis subsp. lactis (strain AD011), this protein is Cell division protein SepF.